The following is a 500-amino-acid chain: ATP synthase subunit alpha (500 aa).

Residue 169–176 (GDRQTGKT) coordinates ATP.

Belongs to the ATPase alpha/beta chains family. In terms of assembly, F-type ATPases have 2 components, CF(1) - the catalytic core - and CF(0) - the membrane proton channel. CF(1) has five subunits: alpha(3), beta(3), gamma(1), delta(1), epsilon(1). CF(0) has three main subunits: a(1), b(2) and c(9-12). The alpha and beta chains form an alternating ring which encloses part of the gamma chain. CF(1) is attached to CF(0) by a central stalk formed by the gamma and epsilon chains, while a peripheral stalk is formed by the delta and b chains.

The protein localises to the cell inner membrane. The enzyme catalyses ATP + H2O + 4 H(+)(in) = ADP + phosphate + 5 H(+)(out). Functionally, produces ATP from ADP in the presence of a proton gradient across the membrane. The alpha chain is a regulatory subunit. This is ATP synthase subunit alpha from Fusobacterium nucleatum subsp. nucleatum (strain ATCC 25586 / DSM 15643 / BCRC 10681 / CIP 101130 / JCM 8532 / KCTC 2640 / LMG 13131 / VPI 4355).